We begin with the raw amino-acid sequence, 496 residues long: Lysine--tRNA ligase (496 aa).

Mg(2+)-binding residues include E409 and E416.

The protein belongs to the class-II aminoacyl-tRNA synthetase family. In terms of assembly, homodimer. It depends on Mg(2+) as a cofactor.

The protein localises to the cytoplasm. It catalyses the reaction tRNA(Lys) + L-lysine + ATP = L-lysyl-tRNA(Lys) + AMP + diphosphate. In Streptococcus pneumoniae (strain CGSP14), this protein is Lysine--tRNA ligase.